The following is a 456-amino-acid chain: Protein ESC2 (456 aa).

Residues 1 to 24 (MTGDSRSISEPSINLDPDNTSFSD) show a composition bias toward polar residues. The tract at residues 1–154 (MTGDSRSISE…SSIRSISPAG (154 aa)) is disordered. Positions 25 to 43 (ENSDDFFMDNSYDIDEIDH) are enriched in acidic residues. Over residues 83-93 (QSLSRSSSKNV) the composition is skewed to polar residues. Residues Ser-90, Ser-125, and Ser-126 each carry the phosphoserine modification. One copy of the SUMO-like region 1 repeat lies at 169-287 (ENDDFFKELA…QDFENEVSDI (119 aa)). A coiled-coil region spans residues 301–360 (EATLESKLKEEEAALLIKERQEMERKLEKKRNEQEESEYREFESELKNVEETQEIKENDT). The stretch at 380-456 (MEEVMRIALM…DEDMVDVIID (77 aa)) is one SUMO-like region 2 repeat.

In terms of assembly, component of a cullin-RING ligase (CRL)-like complex composed of at least the cullin RTT101, a linker protein MMS1, and the potential substrate receptor ESC2. Interacts with RTT101 and MMS1. Interacts with SIR2.

It localises to the cytoplasm. Its subcellular location is the nucleus. In terms of biological role, may be a substrate targeting component of a cullin-RING-based E3 ubiquitin-protein ligase complex RTT101(MMS1-ESC2). Involved in HMR and telomere silencing via the recruitment or stabilizing of the SIR (silent information regulators) complex. This Saccharomyces cerevisiae (strain ATCC 204508 / S288c) (Baker's yeast) protein is Protein ESC2 (ESC2).